The following is a 163-amino-acid chain: ATP synthase subunit b (163 aa).

A helical membrane pass occupies residues Ser13 to Ile33.

It belongs to the ATPase B chain family. In terms of assembly, F-type ATPases have 2 components, F(1) - the catalytic core - and F(0) - the membrane proton channel. F(1) has five subunits: alpha(3), beta(3), gamma(1), delta(1), epsilon(1). F(0) has three main subunits: a(1), b(2) and c(10-14). The alpha and beta chains form an alternating ring which encloses part of the gamma chain. F(1) is attached to F(0) by a central stalk formed by the gamma and epsilon chains, while a peripheral stalk is formed by the delta and b chains.

It is found in the cell membrane. In terms of biological role, f(1)F(0) ATP synthase produces ATP from ADP in the presence of a proton or sodium gradient. F-type ATPases consist of two structural domains, F(1) containing the extramembraneous catalytic core and F(0) containing the membrane proton channel, linked together by a central stalk and a peripheral stalk. During catalysis, ATP synthesis in the catalytic domain of F(1) is coupled via a rotary mechanism of the central stalk subunits to proton translocation. Component of the F(0) channel, it forms part of the peripheral stalk, linking F(1) to F(0). This chain is ATP synthase subunit b, found in Buchnera aphidicola subsp. Schizaphis graminum (strain Sg).